Consider the following 218-residue polypeptide: Oxaloacetate decarboxylase, mitochondrial (218 aa).

The N-terminal 18 residues, 1–18, are a transit peptide targeting the mitochondrion; the sequence is MNKFWETGRKIVAVGRNY. Mg(2+) contacts are provided by glutamate 63, glutamate 65, and aspartate 94.

The protein belongs to the FAH family. As to quaternary structure, homodimer. It depends on Mg(2+) as a cofactor. Mn(2+) serves as cofactor.

It localises to the mitochondrion. The protein localises to the cytoplasm. Its subcellular location is the cytosol. It catalyses the reaction a 3-acylpyruvate + H2O = a carboxylate + pyruvate + H(+). It carries out the reaction acetylpyruvate + H2O = acetate + pyruvate + H(+). The catalysed reaction is 3-fumarylpyruvate + H2O = fumarate + pyruvate + H(+). The enzyme catalyses oxaloacetate + H(+) = pyruvate + CO2. Its function is as follows. Mitochondrial protein that acts as an oxaloacetate decarboxylase (ODx), catalyzing the decarboxylation of oxaloacetate (OAA) to pyruvate and CO(2), and as such is likely a regulatory enzyme in the TCA cycle. Also displays acylpyruvase activity, being able to hydrolyze acetylpyruvate and fumarylpyruvate in vitro. This chain is Oxaloacetate decarboxylase, mitochondrial (fahd1), found in Dictyostelium discoideum (Social amoeba).